We begin with the raw amino-acid sequence, 726 residues long: Beta-glucosidase cel3A (726 aa).

Residues 1 to 20 (MASRLVAGLQVLALAGTATA) form the signal peptide. 2 N-linked (GlcNAc...) asparagine glycosylation sites follow: Asn-223 and Asn-592.

Belongs to the glycosyl hydrolase 3 family.

The protein resides in the secreted. It carries out the reaction Hydrolysis of terminal, non-reducing beta-D-glucosyl residues with release of beta-D-glucose.. It participates in glycan metabolism; cellulose degradation. Its function is as follows. Beta-glucosidases are one of a number of cellulolytic enzymes involved in the degradation of cellulosic biomass. Catalyzes the last step releasing glucose from the inhibitory cellobiose. Has a broad substrate specificity but preferentially hydrolyzes highly polymerized 1,3- and 1,4-beta-glucans. The chain is Beta-glucosidase cel3A from Pyricularia oryzae (strain 70-15 / ATCC MYA-4617 / FGSC 8958) (Rice blast fungus).